A 119-amino-acid polypeptide reads, in one-letter code: Acidic phospholipase A2 DE-III (119 aa).

7 cysteine pairs are disulfide-bonded: C11–C72, C26–C118, C28–C44, C43–C99, C50–C92, C60–C85, and C79–C90. Ca(2+) is bound by residues Y27, G29, and G31. H47 is an active-site residue. Residue D48 coordinates Ca(2+). The active site involves D93.

This sequence belongs to the phospholipase A2 family. Group I subfamily. D49 sub-subfamily. Requires Ca(2+) as cofactor. As to expression, expressed by the venom gland.

The protein localises to the secreted. It catalyses the reaction a 1,2-diacyl-sn-glycero-3-phosphocholine + H2O = a 1-acyl-sn-glycero-3-phosphocholine + a fatty acid + H(+). PLA2 catalyzes the calcium-dependent hydrolysis of the 2-acyl groups in 3-sn-phosphoglycerides. The sequence is that of Acidic phospholipase A2 DE-III from Naja melanoleuca (Forest cobra).